The following is a 176-amino-acid chain: MVTIALGSKNPVKISATKEALEILRLNWDLIATDIDSGVDKQPFCDQTYVGARNRALNAIKATNADIGLGIEGGVCNVYGKFIANAVVYVITKEGVENFAISSSFTLPSSIVSLILQGKELGEASDIIFKTINSKTKEGAVGLLTNNIIDRKTLYVQPIILALYPIYNTIINNTLF.

Aspartate 36 lines the Mg(2+) pocket.

Belongs to the YjjX NTPase family. Homodimer. It depends on Mg(2+) as a cofactor. Requires Mn(2+) as cofactor.

It carries out the reaction XTP + H2O = XDP + phosphate + H(+). The catalysed reaction is ITP + H2O = IDP + phosphate + H(+). Its function is as follows. Phosphatase that hydrolyzes non-canonical purine nucleotides such as XTP and ITP to their respective diphosphate derivatives. Probably excludes non-canonical purines from DNA/RNA precursor pool, thus preventing their incorporation into DNA/RNA and avoiding chromosomal lesions. This is Probable inosine/xanthosine triphosphatase from Saccharolobus solfataricus (strain ATCC 35092 / DSM 1617 / JCM 11322 / P2) (Sulfolobus solfataricus).